The following is an 808-amino-acid chain: MQMPSMHRYGHPGQNQRRENQSIRNYLSTRSGSRNRISRSPHNMASVYTRAPAIAYDDDTYDTLEESEDNGFVKTIPNEEQFDNSRGRDRTRSGRSNGHSFLGYLRDTFTERQPSGRRGSDTSRDMINASLKSRARSRRRSSSRRRHRNASMHMHFRGGSRRSATGSQNLINHDRHRRISQSSLGSSREGEYNHASRSSRVRRRHRRSSRRRGPRAGGHGDSFTSITPSGSAEHPISDIDQKRLRKNSDTSSRGTRESPIDDSFGEDNYRLVSRNRATSIYTTPSALYTRTESLKTYKRTTGDSKGTSPALASFLEHKTLSADVINHIPLLRMLESVPRSEAIREDELLYMSAKTFKYVSHWYSNSRPDYANGKMYTSPPPENALAWKRTAKQAHALILHLGRDSLRSSVMSLRELNQSNAVLFLLNSCLKIAICIHKNKMHKYGNVKILSTMPHVRKGDAQIFENSTIHTMRDPMASAARASYGSLAYWPELRCALGSENKRIVRYAIVAMLQAEIYLLTRISSQRVSMNKSELRILSSCITMECVAACIAVQFLYTSLWQILYSSKINREYIWLKTASERSKKLPMASTDLLYAEGACLGRLESSLYGTEGTPLGRTLVEAYLATRSAFTELIYEFQSNSDLFLEKQNVKLGEKLTAAVITATVVLQRLLGHLNIIIAQMVIGSVYHKKDVDVWSETFKMYQYLSYVCKSLYRPVTIDEYINDRDDTMEYLTLEFARGDPPTGMASVIYEDEKSEELESLKLVPPPINYDILGNLVPLRNAIEDASDVIFEKRAVETARREPQRAN.

2 disordered regions span residues 1–21 (MQMP…RENQ) and 77–266 (PNEE…SFGE). Residues 83 to 92 (DNSRGRDRTR) are compositionally biased toward basic and acidic residues. Over residues 133 to 160 (SRARSRRRSSSRRRHRNASMHMHFRGGS) the composition is skewed to basic residues. Residues 162–171 (RSATGSQNLI) are compositionally biased toward polar residues. Residues 197 to 214 (RSSRVRRRHRRSSRRRGP) show a composition bias toward basic residues. Residues 235 to 259 (PISDIDQKRLRKNSDTSSRGTRESP) show a composition bias toward basic and acidic residues.

It belongs to the alphaherpesvirinae HHV-1 UL47 family. As to quaternary structure, interacts with US3 kinase. Interacts with UL31 and UL34; these interactions seem important for efficient virion nuclear egress. Interacts with UL41/VHS. Post-translationally, phosphorylated by US3. This phosphorylation is required for proper nuclear localization. In terms of processing, O-glycosylated.

It is found in the virion tegument. The protein resides in the host nucleus. Its subcellular location is the host cytoplasm. In terms of biological role, tegument protein that can bind to various RNA transcripts. Plays a role in the attenuation of selective viral and cellular mRNA degradation by modulating the activity of host shutoff RNase UL41/VHS. Also plays a role in the primary envelopment of virions in the perinuclear space, probably by interacting with two nuclear egress proteins UL31 and UL34. Plays an important role in the splicing of glycoprotein/gC transcripts and thereby participates in bird-to-bird viral transmission. This is Tegument protein UL47 homolog (MDV060) from Gallus gallus (Chicken).